A 369-amino-acid polypeptide reads, in one-letter code: Somatostatin receptor type 2 (369 aa).

Over 1-43 (MEMSSEQLNGSQVWVSSPFDLNGSLGPSNGSNQTEPYYDMTSN) the chain is Extracellular. 4 N-linked (GlcNAc...) asparagine glycosylation sites follow: Asn-9, Asn-22, Asn-29, and Asn-32. The helical transmembrane segment at 44-67 (AVLTFIYFVVCVVGLCGNTLVIYV) threads the bilayer. Over 68-78 (ILRYAKMKTIT) the chain is Cytoplasmic. A helical membrane pass occupies residues 79–103 (NIYILNLAIADELFMLGLPFLAMQV). At 104–118 (ALVHWPFGKAICRVV) the chain is on the extracellular side. The cysteines at positions 115 and 193 are disulfide-linked. A helical transmembrane segment spans residues 119 to 138 (MTVDGINQFTSIFCLTVMSI). The Cytoplasmic portion of the chain corresponds to 139–161 (DRYLAVVHPIKSAKWRRPRTAKM). Residues 162 to 181 (INVAVWCVSLLVILPIMIYA) traverse the membrane as a helical segment. Residues 182–207 (GLRSNQWGRSSCTINWPGESGAWYTG) lie on the Extracellular side of the membrane. A helical membrane pass occupies residues 208 to 229 (FIIYAFILGFLVPLTIICLCYL). At 230 to 253 (FIIIKVKSSGIRVGSSKRKKSEKK) the chain is on the cytoplasmic side. Residues 254 to 278 (VTRMVSIVVAVFIFCWLPFYIFNVS) form a helical membrane-spanning segment. Residues 279–288 (SVSVAISPTP) lie on the Extracellular side of the membrane. A helical membrane pass occupies residues 289 to 303 (ALKGMFDFVVILTYA). Topologically, residues 304-369 (NSCANPILYA…LLNGDLQTSI (66 aa)) are cytoplasmic. The S-palmitoyl cysteine moiety is linked to residue Cys-328. Residues Ser-341, Ser-343, and Ser-348 each carry the phosphoserine modification. Residues Thr-353 and Thr-354 each carry the phosphothreonine modification.

This sequence belongs to the G-protein coupled receptor 1 family. Homodimer and heterodimer with SSTR3 and SSTR5. Heterodimerization with SSTR3 inactivates SSTR3 receptor function. Heterodimerization with SSTR5 is enhanced by agonist stimulation of SSTR2 and increases SSTR2 cell growth inhibition activity. Following agonist stimulation, homodimers dissociate into monomers which is required for receptor internalization. Interacts with beta-arrestin; this interaction is necessary for receptor internalization and is destabilized by heterodimerization with SSTR5 which results in increased recycling of SSTR2 to the cell surface. Interacts (via C-terminus) with SHANK1 (via PDZ domain). Phosphorylated on serine and threonine residues in response to agonist stimulation, leading to receptor desensitization and rapid internalization. Phosphorylated to a greater extent on serine than threonine residues. Threonine phosphorylation is required for arrestin binding and receptor endocytosis but is not necessary for desensitization. Cerebrum and kidney.

The protein resides in the cell membrane. The protein localises to the cytoplasm. Functionally, receptor for somatostatin-14 and -28. This receptor is coupled via pertussis toxin sensitive G proteins to inhibition of adenylyl cyclase. In addition it stimulates phosphotyrosine phosphatase and PLC via pertussis toxin insensitive as well as sensitive G proteins. Inhibits calcium entry by suppressing voltage-dependent calcium channels. Acts as the functionally dominant somatostatin receptor in pancreatic alpha- and beta-cells where it mediates the inhibitory effect of somatostatin-14 on hormone secretion. Inhibits cell growth through enhancement of MAPK1 and MAPK2 phosphorylation and subsequent up-regulation of CDKN1B. Stimulates neuronal migration and axon outgrowth and may participate in neuron development and maturation during brain development. Mediates negative regulation of insulin receptor signaling through PTPN6. Inactivates SSTR3 receptor function following heterodimerization. This Mus musculus (Mouse) protein is Somatostatin receptor type 2 (Sstr2).